Here is a 961-residue protein sequence, read N- to C-terminus: DNA repair endonuclease XPF (961 aa).

3 disordered regions span residues 1 to 27, 451 to 485, and 674 to 693; these read MADS…SADT, NYAK…PPLA, and PTDE…QATK. The segment covering 13-22 has biased composition (basic and acidic residues); that stretch reads TENERPKEVE. A compositionally biased stretch (polar residues) spans 458 to 469; it reads TRSAPPKNVSSN. The ERCC4 domain occupies 697 to 777; sequence KVIVDMREFR…KPILLIEFDQ (81 aa).

The protein belongs to the XPF family. As to quaternary structure, heterodimer. Interacts with hdm.

It localises to the nucleus. Functionally, implicated in recombination events during meiosis, mostly in meiotic exchange. May directly resolve Holliday junctions within recombination intermediates leading to DNA exchange. Also required for the repair of mismatches within meiotic heteroduplex DNA and for nucleotide excision repair. This is DNA repair endonuclease XPF (mei-9) from Drosophila melanogaster (Fruit fly).